An 832-amino-acid polypeptide reads, in one-letter code: Prickle-like protein 1-B (832 aa).

Residues 14–122 (FGCQRSSTSD…NIKMLSRAVM (109 aa)) enclose the PET domain. LIM zinc-binding domains are found at residues 124 to 188 (AMCE…ELLK), 189 to 249 (PRCS…HYAE), and 250 to 313 (YCES…EDVH). Disordered stretches follow at residues 312-346 (VHAS…ADQC), 428-455 (QQPS…QRNN), 602-701 (ICQE…KERN), and 766-832 (CSSS…CIIS). Basic and acidic residues-rich tracts occupy residues 432-453 (EDNR…DLQR) and 603-614 (CQEKPPPEEKPM). 2 stretches are compositionally biased toward basic residues: residues 669 to 680 (RPHHHRRRKSRK) and 816 to 832 (TKSK…CIIS). A Cysteine methyl ester modification is found at C829. Residue C829 is the site of S-farnesyl cysteine attachment. The propeptide at 830–832 (IIS) is removed in mature form.

The protein belongs to the prickle / espinas / testin family. Interacts with dvl2/dsh and mapk8/jnk1. As to expression, expressed in the dorsal marginal zone of early gastrulae (stage 10). As gastrulation proceeds, expression expands to include the lateral and ventral marginal zones, excluding the few rows of cells above the blastopore lip. Expression moves dorsally with gastrulation cell movements, and by the end of gastrulation expression is seen in dorsal mesoderm and posterior but not anterior neural ectoderm. Expression becomes down-regulated in mesoderm but remains strong in posterior ectoderm through the neurula stages. During tailbud stages, expressed in the pronephric duct, tailbud, tailtip and forming somites. In the most posterior regions, expressed in notochord and in the floorplate of the neural tube with weak expression in the roofplate. At stage 30, expressed in a complex pattern in the head including strong expression in the lens and otic vesicle.

The protein resides in the cell membrane. Functionally, acts in a planar cell polarity (PCP) complex; polarization along the apical/basal axis of epithelial cells. Regulates the polarized assembly of fibronectrin on the surface of the mesoderm during gastrulation. Essential for gastrulation cell movements, cooperating with dvl2/dsh to activate jnk. Acts together with tes to control axial elongation. This is Prickle-like protein 1-B (prickle1-b) from Xenopus laevis (African clawed frog).